Consider the following 155-residue polypeptide: Small ribosomal subunit protein uS7c (155 aa).

This sequence belongs to the universal ribosomal protein uS7 family. In terms of assembly, part of the 30S ribosomal subunit.

The protein resides in the plastid. It is found in the chloroplast. Functionally, one of the primary rRNA binding proteins, it binds directly to 16S rRNA where it nucleates assembly of the head domain of the 30S subunit. This is Small ribosomal subunit protein uS7c (rps7) from Cornus mas (Cornelian cherry dogwood).